A 289-amino-acid polypeptide reads, in one-letter code: Protein SET (289 aa).

A disordered region spans residues Met1–Glu42. Ala2 is modified (n,N,N-trimethylalanine). Phosphoserine is present on Ser7. Pro11 is subject to N6-acetyllysine. Residue Lys15 is modified to Phosphoserine. The residue at position 23 (Lys23) is an N6-acetyllysine. Residues Leu24, Ser28, and Ser62 each carry the phosphoserine modification. The tract at residues Pro31 to Gln77 is dimerization. Position 67 is an N6-acetyllysine (Lys67). An earmuff domain region spans residues Pro78 to Ile224. Position 145 is a phosphotyrosine (Tyr145). N6-acetyllysine is present on Lys149. Lys153 participates in a covalent cross-link: Glycyl lysine isopeptide (Lys-Gly) (interchain with G-Cter in ubiquitin). Disordered stretches follow at residues Leu157–Thr206 and Pro235–Asp289. The span at Thr168–Lys180 shows a compositional bias: basic and acidic residues. At Lys171 the chain carries N6-acetyllysine. Residues Asp236–Asp289 show a composition bias toward acidic residues.

The protein belongs to the nucleosome assembly protein (NAP) family. As to quaternary structure, headphone-shaped homodimer. Isoform 1 and isoform 2 interact directly with each other and with ANP32A within the tripartite INHAT (inhibitor of acetyltransferases) complex. Isoform 1 and isoform 2 interact also with histones. Isoform 2 is a omponent of the SET complex, composed of at least ANP32A, APEX1, HMGB2, NME1, SET and TREX1, but not NME2 or TREX2. Within this complex, directly interacts with ANP32A, NME1, HMGB2 and TREX1; the interaction with ANP32A is enhanced after cleavage. Interacts with APBB1, CHTOP, SETBP1, SGO1. Post-translationally, isoform 2 is phosphorylated on Ser-15 and Ser-24. Isoform 2 is acetylated on Lys-11. In terms of processing, some glutamate residues are glycylated by TTLL8. This modification occurs exclusively on glutamate residues and results in a glycine chain on the gamma-carboxyl group. Post-translationally, N-terminus of isoform 1 is methylated by METTL11A/NTM1. Mainly trimethylated. Cleaved after Lys-176 by GZMA. The cleavage inhibits its nucleosome assembly activity and disrupts the inhibition on NME1. As to expression, widely expressed, with higher expression in brain, thymus, spleen and bone marrow, and lower expression in heart, liver and muscle.

It is found in the cytoplasm. It localises to the cytosol. The protein localises to the endoplasmic reticulum. Its subcellular location is the nucleus. The protein resides in the nucleoplasm. Its function is as follows. Multitasking protein, involved in apoptosis, transcription, nucleosome assembly and histone chaperoning. Isoform 2 anti-apoptotic activity is mediated by inhibition of the GZMA-activated DNase, NME1. In the course of cytotoxic T-lymphocyte (CTL)-induced apoptosis, GZMA cleaves SET, disrupting its binding to NME1 and releasing NME1 inhibition. Isoform 1 and isoform 2 are potent inhibitors of protein phosphatase 2A. Isoform 1 and isoform 2 inhibit EP300/CREBBP and PCAF-mediated acetylation of histones (HAT) and nucleosomes, most probably by masking the accessibility of lysines of histones to the acetylases. The predominant target for inhibition is histone H4. HAT inhibition leads to silencing of HAT-dependent transcription and prevents active demethylation of DNA. Both isoforms stimulate DNA replication of the adenovirus genome complexed with viral core proteins; however, isoform 2 specific activity is higher. The chain is Protein SET (Set) from Rattus norvegicus (Rat).